Reading from the N-terminus, the 132-residue chain is Extracellular small neutral protease (132 aa).

Positions 76 and 78 each coordinate Ca(2+). H83 provides a ligand contact to Zn(2+). E84 is an active-site residue. Zn(2+) contacts are provided by H87 and D93. The cysteines at positions 99 and 112 are disulfide-linked.

This sequence belongs to the peptidase M7 family. Ca(2+) is required as a cofactor. It depends on Zn(2+) as a cofactor.

The protein resides in the secreted. The catalysed reaction is Hydrolyzes proteins with a preference for Tyr or Phe in the P1' position. Has no action on amino-acid p-nitroanilides.. Specifically hydrolyzes the peptide bond at the imino side of aromatic residues. The protein is Extracellular small neutral protease (snpA) of Streptomyces caespitosus.